The following is a 295-amino-acid chain: 4-hydroxy-3-methylbut-2-enyl diphosphate reductase (295 aa).

Cysteine 12 serves as a coordination point for [4Fe-4S] cluster. Residues histidine 43 and histidine 81 each contribute to the (2E)-4-hydroxy-3-methylbut-2-enyl diphosphate site. Dimethylallyl diphosphate-binding residues include histidine 43 and histidine 81. Positions 43 and 81 each coordinate isopentenyl diphosphate. Cysteine 103 lines the [4Fe-4S] cluster pocket. Residue histidine 131 coordinates (2E)-4-hydroxy-3-methylbut-2-enyl diphosphate. Histidine 131 serves as a coordination point for dimethylallyl diphosphate. Histidine 131 provides a ligand contact to isopentenyl diphosphate. Glutamate 133 acts as the Proton donor in catalysis. Threonine 171 is a (2E)-4-hydroxy-3-methylbut-2-enyl diphosphate binding site. Residue cysteine 199 coordinates [4Fe-4S] cluster. Residues serine 227, asparagine 229, and serine 272 each contribute to the (2E)-4-hydroxy-3-methylbut-2-enyl diphosphate site. 3 residues coordinate dimethylallyl diphosphate: serine 227, asparagine 229, and serine 272. Isopentenyl diphosphate is bound by residues serine 227, asparagine 229, and serine 272.

This sequence belongs to the IspH family. Requires [4Fe-4S] cluster as cofactor.

The catalysed reaction is isopentenyl diphosphate + 2 oxidized [2Fe-2S]-[ferredoxin] + H2O = (2E)-4-hydroxy-3-methylbut-2-enyl diphosphate + 2 reduced [2Fe-2S]-[ferredoxin] + 2 H(+). The enzyme catalyses dimethylallyl diphosphate + 2 oxidized [2Fe-2S]-[ferredoxin] + H2O = (2E)-4-hydroxy-3-methylbut-2-enyl diphosphate + 2 reduced [2Fe-2S]-[ferredoxin] + 2 H(+). It participates in isoprenoid biosynthesis; dimethylallyl diphosphate biosynthesis; dimethylallyl diphosphate from (2E)-4-hydroxy-3-methylbutenyl diphosphate: step 1/1. It functions in the pathway isoprenoid biosynthesis; isopentenyl diphosphate biosynthesis via DXP pathway; isopentenyl diphosphate from 1-deoxy-D-xylulose 5-phosphate: step 6/6. In terms of biological role, catalyzes the conversion of 1-hydroxy-2-methyl-2-(E)-butenyl 4-diphosphate (HMBPP) into a mixture of isopentenyl diphosphate (IPP) and dimethylallyl diphosphate (DMAPP). Acts in the terminal step of the DOXP/MEP pathway for isoprenoid precursor biosynthesis. This chain is 4-hydroxy-3-methylbut-2-enyl diphosphate reductase, found in Symbiobacterium thermophilum (strain DSM 24528 / JCM 14929 / IAM 14863 / T).